The chain runs to 284 residues: Tropomyosin (284 aa).

Residues 1 to 273 (MDAIKKKMLA…KEKYKAISDE (273 aa)) are a coiled coil.

The protein belongs to the tropomyosin family. As to quaternary structure, homodimer.

Its function is as follows. Tropomyosin, in association with the troponin complex, plays a central role in the calcium dependent regulation of muscle contraction. The polypeptide is Tropomyosin (Haliotis diversicolor (Abalone)).